The sequence spans 165 residues: UPF0303 protein Bcenmc03_1534 (165 aa).

The protein belongs to the UPF0303 family.

The protein is UPF0303 protein Bcenmc03_1534 of Burkholderia orbicola (strain MC0-3).